The chain runs to 316 residues: MVKKNFIPSVSLVRRDLPTLVTTTTSSTALSKPTSSVVSETSSKSLPSLTSSAFSTSSGATSSSSLIVASITPPSTAGNPFILNAADKPNGTVYIAVGAVIGAIFISILIWWLVSSYLSRRFTMTNSYANDSKNLYRGHHKHSSSLQSNPFDINDEKSYMQDDWDSMSQLESSQYEDAASPFNPIQDPFTDNRRSLFISPTLQVSQYEKSHSRHQSKDTNIFIDDPFLYVGTYLEEEEEEEEERKLNLNRPQRAASPERKEKKINSMEGYHKRNQSSLGLIPVASATSNTSSPKKAHKRQAPSMFLDDVLNGREII.

Positions 32-60 are disordered; sequence KPTSSVVSETSSKSLPSLTSSAFSTSSGA. Residues 93 to 113 form a helical membrane-spanning segment; sequence VYIAVGAVIGAIFISILIWWL. Phosphoserine is present on residues Ser-148, Ser-256, and Ser-276. The interval 240–304 is disordered; the sequence is EEEERKLNLN…KAHKRQAPSM (65 aa). Basic and acidic residues predominate over residues 256–271; sequence SPERKEKKINSMEGYH.

It belongs to the PRM5 family.

It localises to the vacuole membrane. This chain is Vacuolar membrane protein YNL058C, found in Saccharomyces cerevisiae (strain ATCC 204508 / S288c) (Baker's yeast).